A 1026-amino-acid polypeptide reads, in one-letter code: Multidrug resistance protein MdtC (1026 aa).

11 helical membrane-spanning segments follow: residues 15–35 (ILIAAAITLCGILGFRLLPVA), 333–353 (EVEETLAISVALVILVVFLFL), 360–380 (LIPAVAVPVSLIGTFAAMYLC), 387–407 (LSLMALTIATGFVVDDAIVVL), 431–451 (VGFTVISMSLSLVAVFLPLLL), 463–483 (FAVTLSVAIGISLVVSLTLTP), 528–548 (LVGVVFLGTVALNIWLYIAIP), 853–873 (LILIVAAIATVYIVLEILYES), 897–917 (LFNAPFSLIALIGIMLLIGIV), 953–973 (PIMMTTLAALFGALPLVLSGG), and 984–1004 (ITIVGGLVMSQLLTLYTTPVV).

This sequence belongs to the resistance-nodulation-cell division (RND) (TC 2.A.6) family. MdtC subfamily. As to quaternary structure, part of a tripartite efflux system composed of MdtA, MdtB and MdtC. MdtC forms a heteromultimer with MdtB.

The protein resides in the cell inner membrane. The protein is Multidrug resistance protein MdtC of Salmonella paratyphi A (strain AKU_12601).